A 159-amino-acid polypeptide reads, in one-letter code: Putative 4-hydroxy-4-methyl-2-oxoglutarate aldolase (159 aa).

Residues 75-78 (GDQL) and arginine 97 contribute to the substrate site. Residue aspartate 98 coordinates a divalent metal cation.

This sequence belongs to the class II aldolase/RraA-like family. In terms of assembly, homotrimer. It depends on a divalent metal cation as a cofactor.

The enzyme catalyses 4-hydroxy-4-methyl-2-oxoglutarate = 2 pyruvate. It carries out the reaction oxaloacetate + H(+) = pyruvate + CO2. Its function is as follows. Catalyzes the aldol cleavage of 4-hydroxy-4-methyl-2-oxoglutarate (HMG) into 2 molecules of pyruvate. Also contains a secondary oxaloacetate (OAA) decarboxylase activity due to the common pyruvate enolate transition state formed following C-C bond cleavage in the retro-aldol and decarboxylation reactions. This is Putative 4-hydroxy-4-methyl-2-oxoglutarate aldolase from Laribacter hongkongensis (strain HLHK9).